An 85-amino-acid polypeptide reads, in one-letter code: Small integral membrane protein 2 (85 aa).

A helical membrane pass occupies residues 21 to 43; it reads GHAISILFGFWTSFICDTYIVLA. Residues 51-85 are disordered; sequence SPDVSASSDEPYARIQQSRRQCHAEEDQSQVPEAG.

The protein resides in the membrane. This Homo sapiens (Human) protein is Small integral membrane protein 2 (SMIM2).